The chain runs to 278 residues: Probable velvet family sexual development regulator SCHCODRAFT_28806 (278 aa).

Residues 51 to 255 form the Velvet domain; it reads GRTIRASLDE…ARVGVRLSVR (205 aa). Positions 257-278 are disordered; it reads TGKKATTKRRKRSDSFDEDDSS.

The protein belongs to the velvet family.

Its subcellular location is the nucleus. Its function is as follows. Velvet-domain-containing protein that probably acts as a positive regulator of sexual development. This chain is Probable velvet family sexual development regulator SCHCODRAFT_28806, found in Schizophyllum commune (strain H4-8 / FGSC 9210) (Split gill fungus).